Here is a 932-residue protein sequence, read N- to C-terminus: Protein translocase subunit SecA (932 aa).

Residues glutamine 86, glycine 104–threonine 108, and aspartate 494 contribute to the ATP site. A disordered region spans residues glutamate 857–arginine 932. Residues threonine 905–proline 915 are compositionally biased toward polar residues. The segment covering lysine 920–arginine 932 has biased composition (basic residues).

This sequence belongs to the SecA family. In terms of assembly, monomer and homodimer. Part of the essential Sec protein translocation apparatus which comprises SecA, SecYEG and auxiliary proteins SecDF. Other proteins may also be involved.

Its subcellular location is the cell membrane. It is found in the cytoplasm. It catalyses the reaction ATP + H2O + cellular proteinSide 1 = ADP + phosphate + cellular proteinSide 2.. Its function is as follows. Part of the Sec protein translocase complex. Interacts with the SecYEG preprotein conducting channel. Has a central role in coupling the hydrolysis of ATP to the transfer of proteins into and across the cell membrane, serving as an ATP-driven molecular motor driving the stepwise translocation of polypeptide chains across the membrane. This Renibacterium salmoninarum (strain ATCC 33209 / DSM 20767 / JCM 11484 / NBRC 15589 / NCIMB 2235) protein is Protein translocase subunit SecA.